A 413-amino-acid polypeptide reads, in one-letter code: BEN domain-containing protein 7 (413 aa).

Glycyl lysine isopeptide (Lys-Gly) (interchain with G-Cter in SUMO2) cross-links involve residues Lys-16, Lys-56, and Lys-85. Residues 78-88 show a composition bias toward basic and acidic residues; that stretch reads GKEGEKLKEEP. Disordered stretches follow at residues 78-153 and 208-243; these read GKEG…GELP and RTAVSRKRNKKKKVPPKTVEPLTVKQKPSGSEMEKK. 2 stretches are compositionally biased toward polar residues: residues 99–111 and 121–153; these read LNSSAEAPQSLHP and PPQSGQFSGQYGTRSRTFQSQPHPTTSSNGELP. The span at 211–222 shows a compositional bias: basic residues; the sequence is VSRKRNKKKKVP. Low complexity predominate over residues 223 to 232; sequence PKTVEPLTVK. Lys-243 participates in a covalent cross-link: Glycyl lysine isopeptide (Lys-Gly) (interchain with G-Cter in SUMO2). The BEN domain maps to 287-392; sequence GFDVFMPKSQ…IKLARRRLKR (106 aa). Residue Thr-324 is modified to Phosphothreonine. Phosphoserine is present on Ser-328.

This Homo sapiens (Human) protein is BEN domain-containing protein 7 (BEND7).